The sequence spans 129 residues: Histone H2A type 2-C (129 aa).

Positions 1 to 22 (MSGRGKQGGKARAKAKSRSSRA) are disordered. Ser2 carries the post-translational modification N-acetylserine. Residue Ser2 is modified to Phosphoserine; by RPS6KA5. Residue Arg4 is modified to Citrulline; alternate. Symmetric dimethylarginine; by PRMT5; alternate is present on Arg4. 2 positions are modified to N6-(2-hydroxyisobutyryl)lysine; alternate: Lys6 and Lys10. At Lys6 the chain carries N6-acetyllysine; alternate. The segment covering 7-19 (QGGKARAKAKSRS) has biased composition (basic residues). Lys10 carries the post-translational modification N6-lactoyllysine; alternate. An N6-succinyllysine; alternate modification is found at Lys10. Residues Lys14 and Lys16 each participate in a glycyl lysine isopeptide (Lys-Gly) (interchain with G-Cter in ubiquitin) cross-link. Position 37 is an N6-(2-hydroxyisobutyryl)lysine; alternate (Lys37). Lys37 carries the N6-(beta-hydroxybutyryl)lysine; alternate modification. Lys37 carries the post-translational modification N6-crotonyllysine; alternate. An N6-(2-hydroxyisobutyryl)lysine mark is found at Lys75 and Lys76. An N6-(2-hydroxyisobutyryl)lysine; alternate modification is found at Lys96. Position 96 is an N6-succinyllysine; alternate (Lys96). An N6-glutaryllysine; alternate modification is found at Lys96. Residue Lys100 is modified to N6-glutaryllysine. Position 105 is an N5-methylglutamine (Gln105). Residue Lys119 is modified to N6-(2-hydroxyisobutyryl)lysine; alternate. Lys119 and Lys120 each carry N6-crotonyllysine; alternate. Lys119 and Lys120 each carry N6-glutaryllysine; alternate. Lys120 is covalently cross-linked (Glycyl lysine isopeptide (Lys-Gly) (interchain with G-Cter in ubiquitin); alternate). At Thr121 the chain carries Phosphothreonine; by DCAF1. Ser123 carries the post-translational modification Phosphoserine. The residue at position 125 (Lys125) is an N6-crotonyllysine.

It belongs to the histone H2A family. In terms of assembly, the nucleosome is a histone octamer containing two molecules each of H2A, H2B, H3 and H4 assembled in one H3-H4 heterotetramer and two H2A-H2B heterodimers. The octamer wraps approximately 147 bp of DNA. Post-translationally, deiminated on Arg-4 in granulocytes upon calcium entry. In terms of processing, monoubiquitination of Lys-120 (H2AK119Ub) by RING1, TRIM37 and RNF2/RING2 complex gives a specific tag for epigenetic transcriptional repression and participates in X chromosome inactivation of female mammals. It is involved in the initiation of both imprinted and random X inactivation. Ubiquitinated H2A is enriched in inactive X chromosome chromatin. Ubiquitination of H2A functions downstream of methylation of 'Lys-27' of histone H3 (H3K27me). H2AK119Ub by RNF2/RING2 can also be induced by ultraviolet and may be involved in DNA repair. Following DNA double-strand breaks (DSBs), it is ubiquitinated through 'Lys-63' linkage of ubiquitin moieties by the E2 ligase UBE2N and the E3 ligases RNF8 and RNF168, leading to the recruitment of repair proteins to sites of DNA damage. Ubiquitination at Lys-14 and Lys-16 (H2AK13Ub and H2AK15Ub, respectively) in response to DNA damage is initiated by RNF168 that mediates monoubiquitination at these 2 sites, and 'Lys-63'-linked ubiquitin are then conjugated to monoubiquitin; RNF8 is able to extend 'Lys-63'-linked ubiquitin chains in vitro. H2AK119Ub and ionizing radiation-induced 'Lys-63'-linked ubiquitination (H2AK13Ub and H2AK15Ub) are distinct events. Phosphorylation on Ser-2 (H2AS1ph) is enhanced during mitosis. Phosphorylation on Ser-2 by RPS6KA5/MSK1 directly represses transcription. Acetylation of H3 inhibits Ser-2 phosphorylation by RPS6KA5/MSK1. Phosphorylation at Thr-121 (H2AT120ph) by DCAF1 is present in the regulatory region of many tumor suppresor genes and down-regulates their transcription. Post-translationally, symmetric dimethylation on Arg-4 by the PRDM1/PRMT5 complex may play a crucial role in the germ-cell lineage. In terms of processing, glutamine methylation at Gln-105 (H2AQ104me) by FBL is specifically dedicated to polymerase I. It is present at 35S ribosomal DNA locus and impairs binding of the FACT complex. Crotonylation (Kcr) is specifically present in male germ cells and marks testis-specific genes in post-meiotic cells, including X-linked genes that escape sex chromosome inactivation in haploid cells. Crotonylation marks active promoters and enhancers and confers resistance to transcriptional repressors. It is also associated with post-meiotically activated genes on autosomes. Post-translationally, lactylated in macrophages by EP300/P300 by using lactoyl-CoA directly derived from endogenous or exogenous lactate, leading to stimulates gene transcription.

It localises to the nucleus. The protein resides in the chromosome. Its function is as follows. Core component of nucleosome. Nucleosomes wrap and compact DNA into chromatin, limiting DNA accessibility to the cellular machineries which require DNA as a template. Histones thereby play a central role in transcription regulation, DNA repair, DNA replication and chromosomal stability. DNA accessibility is regulated via a complex set of post-translational modifications of histones, also called histone code, and nucleosome remodeling. The sequence is that of Histone H2A type 2-C from Bos taurus (Bovine).